Consider the following 68-residue polypeptide: DNA-directed RNA polymerase subunit omega (68 aa).

The protein belongs to the RNA polymerase subunit omega family. In terms of assembly, the RNAP catalytic core consists of 2 alpha, 1 beta, 1 beta' and 1 omega subunit. When a sigma factor is associated with the core the holoenzyme is formed, which can initiate transcription.

It carries out the reaction RNA(n) + a ribonucleoside 5'-triphosphate = RNA(n+1) + diphosphate. In terms of biological role, promotes RNA polymerase assembly. Latches the N- and C-terminal regions of the beta' subunit thereby facilitating its interaction with the beta and alpha subunits. The protein is DNA-directed RNA polymerase subunit omega of Ruminiclostridium cellulolyticum (strain ATCC 35319 / DSM 5812 / JCM 6584 / H10) (Clostridium cellulolyticum).